Reading from the N-terminus, the 240-residue chain is Extracellular superoxide dismutase [Cu-Zn] (240 aa).

The first 18 residues, 1–18, serve as a signal peptide directing secretion; it reads MLALLCSCLLLAAGASDA. Cystine bridges form between C63–C208 and C125–C207. N107 carries an N-linked (GlcNAc...) asparagine glycan. 3 residues coordinate Cu cation: H114, H116, and H131. H131, H139, H142, and D145 together coordinate Zn(2+). H181 contacts Cu cation. N-linked (Glc) (glycation) lysine; in vitro glycosylation is found at K229 and K230.

The protein belongs to the Cu-Zn superoxide dismutase family. As to quaternary structure, homotetramer. Directly interacts with ATP7A; this interaction is copper-dependent and is required for SOD3 activity. Cu cation is required as a cofactor. It depends on Zn(2+) as a cofactor. As to expression, expressed in blood vessels, heart, lung, kidney and placenta. Major SOD isoenzyme in extracellular fluids such as plasma, lymph and synovial fluid.

It localises to the secreted. The protein localises to the extracellular space. The protein resides in the golgi apparatus. It is found in the trans-Golgi network. It catalyses the reaction 2 superoxide + 2 H(+) = H2O2 + O2. Protect the extracellular space from toxic effect of reactive oxygen intermediates by converting superoxide radicals into hydrogen peroxide and oxygen. The polypeptide is Extracellular superoxide dismutase [Cu-Zn] (SOD3) (Homo sapiens (Human)).